Here is a 167-residue protein sequence, read N- to C-terminus: Peptide deformylase (167 aa).

Fe cation is bound by residues Cys-91 and His-133. Residue Glu-134 is part of the active site. Residue His-137 coordinates Fe cation.

This sequence belongs to the polypeptide deformylase family. Fe(2+) is required as a cofactor.

The enzyme catalyses N-terminal N-formyl-L-methionyl-[peptide] + H2O = N-terminal L-methionyl-[peptide] + formate. Removes the formyl group from the N-terminal Met of newly synthesized proteins. Requires at least a dipeptide for an efficient rate of reaction. N-terminal L-methionine is a prerequisite for activity but the enzyme has broad specificity at other positions. This is Peptide deformylase from Baumannia cicadellinicola subsp. Homalodisca coagulata.